We begin with the raw amino-acid sequence, 394 residues long: Queuine tRNA-ribosyltransferase (394 aa).

Asp-99 acts as the Proton acceptor in catalysis. Residues 99–103 (DSGGF), Asp-153, Gln-195, and Gly-222 contribute to the substrate site. The interval 253-259 (GVGHPED) is RNA binding. The Nucleophile role is filled by Asp-272. Positions 277–281 (TRTGR) are RNA binding; important for wobble base 34 recognition. Zn(2+)-binding residues include Cys-310, Cys-312, Cys-315, and His-341.

This sequence belongs to the queuine tRNA-ribosyltransferase family. In terms of assembly, homodimer. Within each dimer, one monomer is responsible for RNA recognition and catalysis, while the other monomer binds to the replacement base PreQ1. Zn(2+) is required as a cofactor.

It carries out the reaction 7-aminomethyl-7-carbaguanine + guanosine(34) in tRNA = 7-aminomethyl-7-carbaguanosine(34) in tRNA + guanine. It functions in the pathway tRNA modification; tRNA-queuosine biosynthesis. Catalyzes the base-exchange of a guanine (G) residue with the queuine precursor 7-aminomethyl-7-deazaguanine (PreQ1) at position 34 (anticodon wobble position) in tRNAs with GU(N) anticodons (tRNA-Asp, -Asn, -His and -Tyr). Catalysis occurs through a double-displacement mechanism. The nucleophile active site attacks the C1' of nucleotide 34 to detach the guanine base from the RNA, forming a covalent enzyme-RNA intermediate. The proton acceptor active site deprotonates the incoming PreQ1, allowing a nucleophilic attack on the C1' of the ribose to form the product. After dissociation, two additional enzymatic reactions on the tRNA convert PreQ1 to queuine (Q), resulting in the hypermodified nucleoside queuosine (7-(((4,5-cis-dihydroxy-2-cyclopenten-1-yl)amino)methyl)-7-deazaguanosine). The polypeptide is Queuine tRNA-ribosyltransferase (Deinococcus radiodurans (strain ATCC 13939 / DSM 20539 / JCM 16871 / CCUG 27074 / LMG 4051 / NBRC 15346 / NCIMB 9279 / VKM B-1422 / R1)).